Here is a 433-residue protein sequence, read N- to C-terminus: Enolase (433 aa).

Q163 is a binding site for (2R)-2-phosphoglycerate. E205 serves as the catalytic Proton donor. Residues D241, E289, and D316 each contribute to the Mg(2+) site. (2R)-2-phosphoglycerate is bound by residues K341, R370, S371, and K392. K341 functions as the Proton acceptor in the catalytic mechanism.

It belongs to the enolase family. Mg(2+) serves as cofactor.

Its subcellular location is the cytoplasm. It is found in the secreted. The protein resides in the cell surface. It catalyses the reaction (2R)-2-phosphoglycerate = phosphoenolpyruvate + H2O. Its pathway is carbohydrate degradation; glycolysis; pyruvate from D-glyceraldehyde 3-phosphate: step 4/5. Its function is as follows. Catalyzes the reversible conversion of 2-phosphoglycerate (2-PG) into phosphoenolpyruvate (PEP). It is essential for the degradation of carbohydrates via glycolysis. In Treponema denticola (strain ATCC 35405 / DSM 14222 / CIP 103919 / JCM 8153 / KCTC 15104), this protein is Enolase.